The following is a 104-amino-acid chain: Nucleoid-associated protein OB0030 (104 aa).

The disordered stretch occupies residues 1–23 (MKGNMNNMMKQMQKMQKKMMQAQ).

This sequence belongs to the YbaB/EbfC family. In terms of assembly, homodimer.

The protein localises to the cytoplasm. The protein resides in the nucleoid. Its function is as follows. Binds to DNA and alters its conformation. May be involved in regulation of gene expression, nucleoid organization and DNA protection. The sequence is that of Nucleoid-associated protein OB0030 from Oceanobacillus iheyensis (strain DSM 14371 / CIP 107618 / JCM 11309 / KCTC 3954 / HTE831).